A 243-amino-acid polypeptide reads, in one-letter code: Nuclear ubiquitous casein and cyclin-dependent kinase substrate 1 (243 aa).

Residues 1 to 243 are disordered; sequence MSRPVRNRKV…SEDDAQSGED (243 aa). Position 13 is a phosphotyrosine (Y13). 2 positions are modified to phosphoserine: S14 and S19. Position 26 is a phosphotyrosine (Y26). The span at 35 to 51 shows a compositional bias: basic residues; sequence KKIRSSPREAKNKRRSG. 6 positions are modified to phosphoserine: S54, S58, S61, S73, S75, and S79. Over residues 64–77 the composition is skewed to basic and acidic residues; sequence KDVKTKKDDSHSAE. Low complexity predominate over residues 91–100; sequence QQRQAASKAA. Residues 111 to 124 show a composition bias toward acidic residues; the sequence is VGSEEEQEEEDEAP. A phosphoserine mark is found at S113, S130, S132, and S144. The span at 132 to 145 shows a compositional bias: acidic residues; it reads SDEDFLVEDDDDSD. Basic residues predominate over residues 149–174; that stretch reads SKKKNKKMVKKSKPERKEKKMPKPRL. A Phosphothreonine modification is found at T179. Position 181 is a phosphoserine (S181). A compositionally biased stretch (basic and acidic residues) spans 197 to 206; the sequence is ASKEKTPSPK. T202 carries the phosphothreonine modification. A phosphoserine mark is found at S204, S214, S223, S229, S234, and S240. The segment covering 232 to 243 has biased composition (acidic residues); sequence EGSEDDAQSGED.

Does not interact with RAD51. Phosphorylated in an ATM-dependent manner in response to DNA damage. Phosphorylated by CDK1 and casein kinase.

It localises to the nucleus. The protein resides in the chromosome. Functionally, chromatin-associated protein involved in DNA repair by promoting homologous recombination (HR). Binds double-stranded DNA (dsDNA) and secondary DNA structures, such as D-loop structures, but with less affinity than RAD51AP1. The protein is Nuclear ubiquitous casein and cyclin-dependent kinase substrate 1 (NUCKS1) of Bos taurus (Bovine).